The primary structure comprises 666 residues: Non-receptor tyrosine-protein kinase TNK1 (666 aa).

Residue Ser-96 is modified to Phosphoserine. The Protein kinase domain maps to 116–383; it reads VRRGELLGSG…LEGLLQEAWL (268 aa). Residues 122-130 and Lys-148 contribute to the ATP site; that span reads LGSGCFGVV. The active-site Proton acceptor is Asp-245. The residue at position 255 (Ser-255) is a Phosphoserine. An SH3 domain is found at 381–441; that stretch reads AWLSEGRCVR…PASAVTLADL (61 aa). Positions 442-589 are disordered; that stretch reads GGSPVTHPAH…VPSGGPLSDP (148 aa). Residues 457 to 473 are compositionally biased toward basic and acidic residues; that stretch reads HGEKCRGGTDGDREKAT. A Phosphoserine modification is found at Ser-498. Thr-510 carries the phosphothreonine modification. Position 515 is a phosphoserine (Ser-515). Over residues 531–544 the composition is skewed to pro residues; it reads DLPPRPPDLPPRPP. At Ser-582 the chain carries Phosphoserine.

It belongs to the protein kinase superfamily. Tyr protein kinase family. In terms of assembly, interacts with the SH3 domain of PLCG1 via its Pro-rich domain. Autophosphorylated on tyrosine residues. Expressed in whole embryo and all adult tissues examined including liver, kidney, heart, brain, skeletal muscle and intestine. Also detected in various myeloid- and lymphoid-derived cell lines.

The protein localises to the membrane. The protein resides in the cytoplasm. The enzyme catalyses L-tyrosyl-[protein] + ATP = O-phospho-L-tyrosyl-[protein] + ADP + H(+). Functionally, may function in signaling pathways utilized broadly during fetal development and more selectively in adult tissues and in cells of the lymphohematopoietic system. Could specifically be involved in phospholipid signal transduction. Involved in negative regulation of cell growth. Has tumor suppressor properties. Plays a negative regulatory role in the Ras-MAPK pathway. The polypeptide is Non-receptor tyrosine-protein kinase TNK1 (Mus musculus (Mouse)).